The following is a 364-amino-acid chain: tRNA-specific 2-thiouridylase MnmA 1 (364 aa).

ATP-binding positions include 10-17 (GMSGGVDS) and methionine 36. The active-site Nucleophile is the cysteine 106. A disulfide bridge connects residues cysteine 106 and cysteine 204. Residue glycine 130 participates in ATP binding. The interaction with tRNA stretch occupies residues 154 to 156 (KDQ). The active-site Cysteine persulfide intermediate is the cysteine 204. The interval 310 to 311 (RY) is interaction with tRNA.

The protein belongs to the MnmA/TRMU family.

The protein localises to the cytoplasm. It catalyses the reaction S-sulfanyl-L-cysteinyl-[protein] + uridine(34) in tRNA + AH2 + ATP = 2-thiouridine(34) in tRNA + L-cysteinyl-[protein] + A + AMP + diphosphate + H(+). In terms of biological role, catalyzes the 2-thiolation of uridine at the wobble position (U34) of tRNA, leading to the formation of s(2)U34. The polypeptide is tRNA-specific 2-thiouridylase MnmA 1 (Caldanaerobacter subterraneus subsp. tengcongensis (strain DSM 15242 / JCM 11007 / NBRC 100824 / MB4) (Thermoanaerobacter tengcongensis)).